A 411-amino-acid polypeptide reads, in one-letter code: Na(+)-translocating NADH-quinone reductase subunit F (411 aa).

Residues 5–25 (VILALGIAAFTVIVLVLVAII) form a helical membrane-spanning segment. The 2Fe-2S ferredoxin-type domain maps to 36–130 (GDITIDINDD…NMEVELPEEI (95 aa)). The [2Fe-2S] cluster site is built by Cys-73, Cys-79, Cys-82, and Cys-114. The region spanning 133–273 (VKKWECTVIS…SGPFGEFFAK (141 aa)) is the FAD-binding FR-type domain.

Belongs to the NqrF family. Composed of six subunits; NqrA, NqrB, NqrC, NqrD, NqrE and NqrF. [2Fe-2S] cluster serves as cofactor. FAD is required as a cofactor.

Its subcellular location is the cell inner membrane. It carries out the reaction a ubiquinone + n Na(+)(in) + NADH + H(+) = a ubiquinol + n Na(+)(out) + NAD(+). NQR complex catalyzes the reduction of ubiquinone-1 to ubiquinol by two successive reactions, coupled with the transport of Na(+) ions from the cytoplasm to the periplasm. The first step is catalyzed by NqrF, which accepts electrons from NADH and reduces ubiquinone-1 to ubisemiquinone by a one-electron transfer pathway. The sequence is that of Na(+)-translocating NADH-quinone reductase subunit F from Haemophilus influenzae (strain PittGG).